The sequence spans 178 residues: MGLELVNAGNNLPEEINVIIEIPKDSEPVKYEVDKASGAIFVDRILSTPMRYPCNYGYVPNTLCGDGDPVDVMVVLPLPLVPGSVVRCRPVGVLQMKDEAGNDEKLLAVPVSKIFSGYSHIEDINQVSAHWLERIGHFFEHYKDLEKGKWVEIDGWGNATTAKQILTNAVQRYKDTLP.

Substrate-binding residues include K30, R44, and Y56. Mg(2+) contacts are provided by D66, D71, and D103. Y142 is a binding site for substrate.

The protein belongs to the PPase family. Homohexamer. It depends on Mg(2+) as a cofactor.

The protein resides in the cytoplasm. The enzyme catalyses diphosphate + H2O = 2 phosphate + H(+). Its function is as follows. Catalyzes the hydrolysis of inorganic pyrophosphate (PPi) forming two phosphate ions. The sequence is that of Inorganic pyrophosphatase from Xylella fastidiosa (strain 9a5c).